The chain runs to 805 residues: Zinc finger X-chromosomal protein (805 aa).

Serine 274 bears the Phosphoserine mark. 13 consecutive C2H2-type zinc fingers follow at residues 425-447, 456-478, 488-510, 519-542, 548-570, 576-599, 605-627, 633-656, 662-684, 690-713, 719-741, 747-770, and 776-798; these read YPCM…MKNH, YRCT…LESH, IECD…KMVH, HKCK…LAVH, HICV…MRIH, YQCQ…KTKH, FKCD…ALIH, HQCL…ISVH, HKCD…VAAH, HQCR…LSVH, FRCK…MKTH, YQCE…ISIH, and HRCE…IMRH.

Belongs to the krueppel C2H2-type zinc-finger protein family. ZFX/ZFY subfamily.

The protein resides in the nucleus. Its function is as follows. Probable transcriptional activator. This chain is Zinc finger X-chromosomal protein (ZFX), found in Homo sapiens (Human).